The primary structure comprises 309 residues: Taste receptor type 2 member 20 (309 aa).

Residues 1–6 (MMSFLH) are Extracellular-facing. The helical transmembrane segment at 7–27 (IVFSILVVVAFILGNFANGFI) threads the bilayer. Residues 28-46 (ALINFIAWVKRQKISSADQ) lie on the Cytoplasmic side of the membrane. Residues 47-67 (IIAALAVSRVGLLWVILLHWY) form a helical membrane-spanning segment. At 68-79 (STVLNPTSSNLK) the chain is on the extracellular side. A helical membrane pass occupies residues 80-100 (VTIFISNAWAVTNHFSIWLAA). The Cytoplasmic portion of the chain corresponds to 101–125 (SLSIFYLLKIVNFSRLIFHHLKRKA). A helical transmembrane segment spans residues 126-146 (KSVVLVIVLGSLFFLVCHLVM). The Extracellular segment spans residues 147 to 178 (KSTYINVWTEEYEGNVTWKIKLRNAMHLSNLT). Asparagine 161 and asparagine 176 each carry an N-linked (GlcNAc...) asparagine glycan. A helical transmembrane segment spans residues 179–199 (VAMLANLIPFTLTLISFLLLI). Residues 200-229 (YSLCKHLKKMQLHGKGSQDPSTKIHIKALQ) lie on the Cytoplasmic side of the membrane. A helical transmembrane segment spans residues 230–250 (TVTSFLILLAIYFLCLITSFW). Topologically, residues 251 to 259 (NSKMRPKEI) are extracellular. Residues 260–280 (VLMLCQAFGIIYPSFHSFILI) traverse the membrane as a helical segment. Residues 281 to 309 (WGNKTLKQTFLSVLWRVTCWAKGQNQSTP) lie on the Cytoplasmic side of the membrane.

This sequence belongs to the G-protein coupled receptor T2R family.

The protein resides in the membrane. Functionally, receptor that may play a role in the perception of bitterness and is gustducin-linked. May play a role in sensing the chemical composition of the gastrointestinal content. The activity of this receptor may stimulate alpha gustducin, mediate PLC-beta-2 activation and lead to the gating of TRPM5. The chain is Taste receptor type 2 member 20 (TAS2R20) from Gorilla gorilla gorilla (Western lowland gorilla).